We begin with the raw amino-acid sequence, 938 residues long: Kexin (938 aa).

An N-terminal signal peptide occupies residues 1-20 (MLPIKLLIFILGYLLSPTLQ). N-linked (GlcNAc...) asparagine glycans are attached at residues asparagine 41 and asparagine 193. A Peptidase S8 domain is found at 179-489 (QWHLINLKYP…YGKTDAYKMV (311 aa)). Active-site charge relay system residues include aspartate 213 and histidine 251. 2 disulfides stabilise this stretch: cysteine 267–cysteine 414 and cysteine 359–cysteine 389. The active-site Charge relay system is serine 422. Asparagine 441, asparagine 512, asparagine 539, and asparagine 599 each carry an N-linked (GlcNAc...) asparagine glycan. The P/Homo B domain maps to 498 to 647 (VKPQAWYYSD…QFRIFGESID (150 aa)). A disordered region spans residues 671-768 (EKQNSKSTTT…DNDNDNGNKK (98 aa)). Residues 677-691 (STTTTSSTTTATTTS) show a composition bias toward low complexity. The segment covering 711 to 735 (KVDNSASITTSQTASLTSSNEQHQP) has biased composition (polar residues). Acidic residues predominate over residues 740–762 (SDSDSDTDDENKQEGEEDNDNDN). A helical transmembrane segment spans residues 775–795 (GFYLMSIAVVGFIAVLLVMKF). Topologically, residues 796–924 (HKTPGSGRRR…SGTSTKKYKD (129 aa)) are cytoplasmic. The segment covering 798 to 808 (TPGSGRRRRRR) has biased composition (basic residues). Positions 798–938 (TPGSGRRRRR…EDHKDVVGTQ (141 aa)) are disordered. Over residues 820 to 831 (DYSDSDDDEDDF) the composition is skewed to acidic residues. The span at 832–849 (DTRRADDDSFDLGHRNDQ) shows a compositional bias: basic and acidic residues. The span at 850–859 (RVVSASQQQR) shows a compositional bias: low complexity. Residues 860-874 (QYDRQQDETRDRLFD) are compositionally biased toward basic and acidic residues. A compositionally biased stretch (polar residues) spans 902-919 (QQSAKAPSNSEGNSGTST). The span at 921-938 (KYKDNEADEDHKDVVGTQ) shows a compositional bias: basic and acidic residues.

The protein belongs to the peptidase S8 family. Furin subfamily. Ca(2+) serves as cofactor. O-glycosylated.

The protein resides in the golgi apparatus. Its subcellular location is the trans-Golgi network membrane. The catalysed reaction is Cleavage of -Lys-Arg-|-Xaa- and -Arg-Arg-|-Xaa- bonds to process yeast alpha-factor pheromone and killer toxin precursors.. This is Kexin (KEX2) from Candida albicans (strain WO-1) (Yeast).